The primary structure comprises 133 residues: Large-conductance mechanosensitive channel (133 aa).

2 consecutive transmembrane segments (helical) span residues 14–34 (VIDL…VSSL) and 67–87 (GNFI…FMFV).

The protein belongs to the MscL family. Homopentamer.

The protein localises to the cell membrane. In terms of biological role, channel that opens in response to stretch forces in the membrane lipid bilayer. May participate in the regulation of osmotic pressure changes within the cell. In Bacillus mycoides (strain KBAB4) (Bacillus weihenstephanensis), this protein is Large-conductance mechanosensitive channel.